Reading from the N-terminus, the 119-residue chain is MHDFCFTIPYGILLIVGGFIGYLKKGSIASLAGGAGTGLLVVLAGFISLKAFEKKKTSLLATLLETVIAAALTFVMGQRFLQTQKIMPAALVAGISALMTCFYVYKIATGGNHIPPKAE.

The next 3 membrane-spanning stretches (helical) occupy residues 27 to 47 (SIAS…AGFI), 57 to 77 (TSLL…FVMG), and 85 to 105 (KIMP…FYVY).

The protein belongs to the TMEM14 family.

The protein resides in the membrane. Functionally, may be involved in free fatty acids export. The protein is Protein FATTY ACID EXPORT 5 of Arabidopsis thaliana (Mouse-ear cress).